A 292-amino-acid polypeptide reads, in one-letter code: Protein/nucleic acid deglycase HchA (292 aa).

Residues 1 to 12 (MSQDVNELSKQP) show a composition bias toward polar residues. The disordered stretch occupies residues 1 to 23 (MSQDVNELSKQPTPDKAEDNAFF). C190 functions as the Nucleophile in the catalytic mechanism.

Belongs to the peptidase C56 family. HchA subfamily.

It is found in the cytoplasm. The enzyme catalyses N(omega)-(1-hydroxy-2-oxopropyl)-L-arginyl-[protein] + H2O = lactate + L-arginyl-[protein] + H(+). It carries out the reaction N(6)-(1-hydroxy-2-oxopropyl)-L-lysyl-[protein] + H2O = lactate + L-lysyl-[protein] + H(+). The catalysed reaction is S-(1-hydroxy-2-oxopropyl)-L-cysteinyl-[protein] + H2O = lactate + L-cysteinyl-[protein] + H(+). It catalyses the reaction N(omega)-(1-hydroxy-2-oxoethyl)-L-arginyl-[protein] + H2O = L-arginyl-[protein] + glycolate + H(+). The enzyme catalyses N(6)-(1-hydroxy-2-oxoethyl)-L-lysyl-[protein] + H2O = glycolate + L-lysyl-[protein] + H(+). It carries out the reaction S-(1-hydroxy-2-oxoethyl)-L-cysteinyl-[protein] + H2O = glycolate + L-cysteinyl-[protein] + H(+). The catalysed reaction is N(2)-(1-hydroxy-2-oxopropyl)-dGTP + H2O = lactate + dGTP + H(+). It catalyses the reaction N(2)-(1-hydroxy-2-oxopropyl)-GTP + H2O = lactate + GTP + H(+). The enzyme catalyses N(2)-(1-hydroxy-2-oxopropyl)-GDP + H2O = lactate + GDP + H(+). It carries out the reaction N(2)-(1-hydroxy-2-oxopropyl)-GMP + H2O = lactate + GMP + H(+). The catalysed reaction is N(2)-(1-hydroxy-2-oxoethyl)-dGTP + H2O = dGTP + glycolate + H(+). It catalyses the reaction N(2)-(1-hydroxy-2-oxoethyl)-GTP + H2O = glycolate + GTP + H(+). The enzyme catalyses N(2)-(1-hydroxy-2-oxoethyl)-GDP + H2O = glycolate + GDP + H(+). It carries out the reaction N(2)-(1-hydroxy-2-oxoethyl)-GMP + H2O = glycolate + GMP + H(+). The catalysed reaction is an N(2)-(1-hydroxy-2-oxopropyl)-guanosine in RNA + H2O = a guanosine in RNA + lactate + H(+). It catalyses the reaction an N(2)-(1-hydroxy-2-oxopropyl)-2'-deoxyguanosine in DNA + H2O = a 2'-deoxyguanosine in DNA + lactate + H(+). The enzyme catalyses an N(2)-(1-hydroxy-2-oxoethyl)-guanosine in RNA + H2O = a guanosine in RNA + glycolate + H(+). It carries out the reaction an N(2)-(1-hydroxy-2-oxoethyl)-2'-deoxyguanosine in DNA + H2O = a 2'-deoxyguanosine in DNA + glycolate + H(+). Its function is as follows. Protein and nucleotide deglycase that catalyzes the deglycation of the Maillard adducts formed between amino groups of proteins or nucleotides and reactive carbonyl groups of glyoxals. Thus, functions as a protein deglycase that repairs methylglyoxal- and glyoxal-glycated proteins, and releases repaired proteins and lactate or glycolate, respectively. Deglycates cysteine, arginine and lysine residues in proteins, and thus reactivates these proteins by reversing glycation by glyoxals. Acts on early glycation intermediates (hemithioacetals and aminocarbinols), preventing the formation of Schiff bases and advanced glycation endproducts (AGE). Also functions as a nucleotide deglycase able to repair glycated guanine in the free nucleotide pool (GTP, GDP, GMP, dGTP) and in DNA and RNA. Is thus involved in a major nucleotide repair system named guanine glycation repair (GG repair), dedicated to reversing methylglyoxal and glyoxal damage via nucleotide sanitization and direct nucleic acid repair. Plays an important role in protecting cells from carbonyl stress. This is Protein/nucleic acid deglycase HchA from Staphylococcus aureus (strain Mu3 / ATCC 700698).